The chain runs to 82 residues: Chlorosome protein E (82 aa).

H26 lines the a bacteriochlorophyll c pocket. Residues 55 to 82 (GSSGLKGSSPKYSGYATPSKEVKSRFEK) are disordered. A compositionally biased stretch (low complexity) spans 59 to 69 (LKGSSPKYSGY).

It belongs to the BChl C/E-binding protein family.

It is found in the chlorosome. Its subcellular location is the chlorosome envelope. Component of the photosynthetic apparatus. The light harvesting B740 complex binds bacteriochlorophyll c. The chain is Chlorosome protein E (csmE) from Chlorobaculum tepidum (strain ATCC 49652 / DSM 12025 / NBRC 103806 / TLS) (Chlorobium tepidum).